The chain runs to 467 residues: F-box/kelch-repeat protein SKIP11 (467 aa).

A disordered region spans residues 77–117; that stretch reads LSGGEEQADAAIGDGSSSRQEQEQQSDFNDNGGDSSDSHSL. The span at 92 to 111 shows a compositional bias: low complexity; that stretch reads SSSRQEQEQQSDFNDNGGDS. Residues 116–163 form the F-box domain; the sequence is SLINEIGRDNSIDCLIRCSRSDYGSIASLNRNFRSLVKSGEIYRLRRQ. Kelch repeat units follow at residues 159–210, 215–259, 261–307, 308–356, and 365–411; these read RLRR…KESL, DLLV…SLGE, AIFA…FMDG, KFYV…DMSP, and AVVN…GLAF.

Part of a SCF (ASK-cullin-F-box) protein ligase complex. Interacts with SKP1A/ASK1 and SPK1B/ASK2.

The protein localises to the nucleus. It participates in protein modification; protein ubiquitination. Its function is as follows. Component of SCF(ASK-cullin-F-box) E3 ubiquitin ligase complexes, which may mediate the ubiquitination and subsequent proteasomal degradation of target proteins. The polypeptide is F-box/kelch-repeat protein SKIP11 (SKIP11) (Arabidopsis thaliana (Mouse-ear cress)).